The chain runs to 694 residues: Elongation factor G (694 aa).

A tr-type G domain is found at 8 to 282 (DRLRNIGIMA…AIVDYLPSPL (275 aa)). GTP is bound by residues 17-24 (AHIDAGKT), 81-85 (DTPGH), and 135-138 (NKMD). Residues 284–303 (IPPVQGTDPETGEPAERKAD) are disordered.

The protein belongs to the TRAFAC class translation factor GTPase superfamily. Classic translation factor GTPase family. EF-G/EF-2 subfamily.

It is found in the cytoplasm. In terms of biological role, catalyzes the GTP-dependent ribosomal translocation step during translation elongation. During this step, the ribosome changes from the pre-translocational (PRE) to the post-translocational (POST) state as the newly formed A-site-bound peptidyl-tRNA and P-site-bound deacylated tRNA move to the P and E sites, respectively. Catalyzes the coordinated movement of the two tRNA molecules, the mRNA and conformational changes in the ribosome. The polypeptide is Elongation factor G (Symbiobacterium thermophilum (strain DSM 24528 / JCM 14929 / IAM 14863 / T)).